The following is a 1106-amino-acid chain: Protein translocase subunit SecA (1106 aa).

Residues glutamine 175, 193–197 (GEGKT), and aspartate 694 each bind ATP. The disordered stretch occupies residues 1021–1106 (QEAPADEQQP…KYKNCHGQNA (86 aa)). Residues 1042-1056 (QRQDMSKYREQKQDL) are compositionally biased toward basic and acidic residues. Over residues 1057–1067 (SDPNQQAAASQ) the composition is skewed to polar residues. A compositionally biased stretch (basic and acidic residues) spans 1068–1085 (DTREQQKREPIRAEKTVG). Residues cysteine 1090, cysteine 1092, cysteine 1101, and histidine 1102 each contribute to the Zn(2+) site.

Belongs to the SecA family. In terms of assembly, monomer and homodimer. Part of the essential Sec protein translocation apparatus which comprises SecA, SecYEG and auxiliary proteins SecDF. Other proteins may also be involved. The cofactor is Zn(2+).

Its subcellular location is the cell inner membrane. It is found in the cytoplasm. The catalysed reaction is ATP + H2O + cellular proteinSide 1 = ADP + phosphate + cellular proteinSide 2.. In terms of biological role, part of the Sec protein translocase complex. Interacts with the SecYEG preprotein conducting channel. Has a central role in coupling the hydrolysis of ATP to the transfer of proteins into and across the cell membrane, serving as an ATP-driven molecular motor driving the stepwise translocation of polypeptide chains across the membrane. In Bacteroides thetaiotaomicron (strain ATCC 29148 / DSM 2079 / JCM 5827 / CCUG 10774 / NCTC 10582 / VPI-5482 / E50), this protein is Protein translocase subunit SecA.